Here is a 755-residue protein sequence, read N- to C-terminus: Subtilisin-like protease 4 (755 aa).

An N-terminal signal peptide occupies residues 1–20 (MDYFLFIALTFLLTFHVHNA). One can recognise an Inhibitor I9 domain in the interval 41–119 (YIIHVTGPEG…ISAHPQRVLH (79 aa)). Positions 128-611 (FLGLQQDTGV…SGHVNPSRAN (484 aa)) constitute a Peptidase S8 domain. The active-site Charge relay system is aspartate 153. Residue asparagine 182 is glycosylated (N-linked (GlcNAc...) asparagine). The active-site Charge relay system is the histidine 217. N-linked (GlcNAc...) asparagine glycans are attached at residues asparagine 297, asparagine 325, asparagine 393, asparagine 468, and asparagine 529. The region spanning 376-461 (PLAYAGKNGK…ATHVSYAAGI (86 aa)) is the PA domain. Serine 544 acts as the Charge relay system in catalysis. N-linked (GlcNAc...) asparagine glycosylation is found at asparagine 706 and asparagine 727.

This sequence belongs to the peptidase S8 family.

It is found in the secreted. Its subcellular location is the extracellular space. The protein resides in the apoplast. In terms of biological role, required for arbuscular mycorrhiza (AM) development during AM symbiosis with AM fungi (e.g. Glomeromycota intraradices). This is Subtilisin-like protease 4 from Lotus japonicus (Lotus corniculatus var. japonicus).